The sequence spans 1439 residues: Gag-Pol polyprotein (1439 aa).

Gly-2 is lipidated: N-myristoyl glycine; by host. Residues 7–31 are interaction with Gp41; that stretch reads VLSGGELDRWEKIRLRPGGKKKYRL. Residues 8-43 form an interaction with host CALM1 region; sequence LSGGELDRWEKIRLRPGGKKKYRLKHIVWASRELER. The segment at 12 to 19 is interaction with host AP3D1; the sequence is ELDRWEKI. The interval 14–33 is interaction with membrane phosphatidylinositol 4,5-bisphosphate and RNA; the sequence is DRWEKIRLRPGGKKKYRLKH. Residues 16–22 carry the Nuclear export signal motif; it reads WEKIRLR. The Nuclear localization signal motif lies at 26–32; it reads KKKYRLK. The segment at 73–77 is interaction with membrane phosphatidylinositol 4,5-bisphosphate; the sequence is EELTS. A disordered region spans residues 106–128; sequence EEQTKSMKKAQQAAADTGNSSQV. Tyr-132 is modified (phosphotyrosine; by host). Residues 189–227 are interaction with human PPIA/CYPA and NUP153; sequence NTVGGHQAAMQMLKETINEEAAEWDRLHPVHAGPIAPGQ. The interval 277-363 is dimerization/Multimerization of capsid protein p24; sequence YSPVSILDIR…GGPGHKARVL (87 aa). 2 consecutive CCHC-type zinc fingers follow at residues 390–407 and 411–428; these read VKCF…NCRA and KGCW…ECTE. The segment at 493–497 is dimerization of protease; the sequence is PQITL. The 70-residue stretch at 512–581 folds into the Peptidase A2 domain; it reads KEALLDTGAD…TPVNIIGRNL (70 aa). Asp-517 (for protease activity; shared with dimeric partner) is an active-site residue. Dimerization of protease stretches follow at residues 541–547 and 580–592; these read GIGGFIK and NLLT…LNFP. In terms of domain architecture, Reverse transcriptase spans 635–825; the sequence is EGKISKIGPE…PPFLWMGYEL (191 aa). The Mg(2+) site is built by Asp-701, Asp-776, and Asp-777. Residues 818-826 are RT 'primer grip'; that stretch reads FLWMGYELH. Residues 989–1005 carry the Tryptophan repeat motif motif; it reads WETWWTEYWQATWIPEW. Residues 1025-1148 enclose the RNase H type-1 domain; it reads IVGAETFYVD…VDKLVSAGIR (124 aa). Residues Asp-1034, Glu-1069, Asp-1089, and Asp-1140 each coordinate Mg(2+). The Integrase-type zinc finger occupies 1154 to 1195; sequence DGIDKAQEDHEKYHSNWRAMASDFNLPPIVAKEIVASCDKCQ. 4 residues coordinate Zn(2+): His-1163, His-1167, Cys-1191, and Cys-1194. The Integrase catalytic domain maps to 1205–1355; the sequence is VDCSPGIWQL…SAGERIIDII (151 aa). 3 residues coordinate Mg(2+): Asp-1215, Asp-1267, and Glu-1303. The integrase-type DNA-binding region spans 1374 to 1421; sequence FRVYYRDNRDPIWKGPAKLLWKGEGAVVIQDNSDIKVVPRRKVKIIRD.

In terms of assembly, homotrimer; further assembles as hexamers of trimers. Interacts with gp41 (via C-terminus). Interacts with host CALM1; this interaction induces a conformational change in the Matrix protein, triggering exposure of the myristate group. Interacts with host AP3D1; this interaction allows the polyprotein trafficking to multivesicular bodies during virus assembly. Part of the pre-integration complex (PIC) which is composed of viral genome, matrix protein, Vpr and integrase. Homodimer; the homodimer further multimerizes as homohexamers or homopentamers. Interacts with human PPIA/CYPA; This interaction stabilizes the capsid. Interacts with human NUP153. Interacts with host PDZD8; this interaction stabilizes the capsid. Interacts with monkey TRIM5; this interaction destabilizes the capsid. As to quaternary structure, homodimer, whose active site consists of two apposed aspartic acid residues. In terms of assembly, heterodimer of p66 RT and p51 RT (RT p66/p51). Heterodimerization of RT is essential for DNA polymerase activity. The overall folding of the subdomains is similar in p66 RT and p51 RT but the spatial arrangements of the subdomains are dramatically different. Homotetramer; may further associate as a homohexadecamer. Part of the pre-integration complex (PIC) which is composed of viral genome, matrix protein, Vpr and integrase. Interacts with human SMARCB1/INI1 and human PSIP1/LEDGF isoform 1. Interacts with human KPNA3; this interaction might play a role in nuclear import of the pre-integration complex. Interacts with human NUP153; this interaction might play a role in nuclear import of the pre-integration complex. Mg(2+) is required as a cofactor. Specific enzymatic cleavages by the viral protease yield mature proteins. The protease is released by autocatalytic cleavage. The polyprotein is cleaved during and after budding, this process is termed maturation. Proteolytic cleavage of p66 RT removes the RNase H domain to yield the p51 RT subunit. Nucleocapsid protein p7 might be further cleaved after virus entry. In terms of processing, tyrosine phosphorylated presumably in the virion by a host kinase. Phosphorylation is apparently not a major regulator of membrane association. Post-translationally, phosphorylated possibly by host MAPK1; this phosphorylation is necessary for Pin1-mediated virion uncoating. Methylated by host PRMT6, impairing its function by reducing RNA annealing and the initiation of reverse transcription.

The protein localises to the host cell membrane. Its subcellular location is the host endosome. It localises to the host multivesicular body. It is found in the virion membrane. The protein resides in the host nucleus. The protein localises to the host cytoplasm. Its subcellular location is the virion. It catalyses the reaction Specific for a P1 residue that is hydrophobic, and P1' variable, but often Pro.. The catalysed reaction is Endohydrolysis of RNA in RNA/DNA hybrids. Three different cleavage modes: 1. sequence-specific internal cleavage of RNA. Human immunodeficiency virus type 1 and Moloney murine leukemia virus enzymes prefer to cleave the RNA strand one nucleotide away from the RNA-DNA junction. 2. RNA 5'-end directed cleavage 13-19 nucleotides from the RNA end. 3. DNA 3'-end directed cleavage 15-20 nucleotides away from the primer terminus.. The enzyme catalyses 3'-end directed exonucleolytic cleavage of viral RNA-DNA hybrid.. It carries out the reaction DNA(n) + a 2'-deoxyribonucleoside 5'-triphosphate = DNA(n+1) + diphosphate. Its activity is regulated as follows. Protease: The viral protease is inhibited by many synthetic protease inhibitors (PIs), such as amprenavir, atazanavir, indinavir, loprinavir, nelfinavir, ritonavir and saquinavir. Use of protease inhibitors in tritherapy regimens permit more ambitious therapeutic strategies. Reverse transcriptase/ribonuclease H: RT can be inhibited either by nucleoside RT inhibitors (NRTIs) or by non nucleoside RT inhibitors (NNRTIs). NRTIs act as chain terminators, whereas NNRTIs inhibit DNA polymerization by binding a small hydrophobic pocket near the RT active site and inducing an allosteric change in this region. Classical NRTIs are abacavir, adefovir (PMEA), didanosine (ddI), lamivudine (3TC), stavudine (d4T), tenofovir (PMPA), zalcitabine (ddC), and zidovudine (AZT). Classical NNRTIs are atevirdine (BHAP U-87201E), delavirdine, efavirenz (DMP-266), emivirine (I-EBU), and nevirapine (BI-RG-587). The tritherapies used as a basic effective treatment of AIDS associate two NRTIs and one NNRTI. Mediates, with Gag polyprotein, the essential events in virion assembly, including binding the plasma membrane, making the protein-protein interactions necessary to create spherical particles, recruiting the viral Env proteins, and packaging the genomic RNA via direct interactions with the RNA packaging sequence (Psi). Gag-Pol polyprotein may regulate its own translation, by the binding genomic RNA in the 5'-UTR. At low concentration, the polyprotein would promote translation, whereas at high concentration, the polyprotein would encapsidate genomic RNA and then shut off translation. Its function is as follows. Targets the polyprotein to the plasma membrane via a multipartite membrane-binding signal, that includes its myristoylated N-terminus. Matrix protein is part of the pre-integration complex. Implicated in the release from host cell mediated by Vpu. Binds to RNA. In terms of biological role, forms the conical core that encapsulates the genomic RNA-nucleocapsid complex in the virion. Most core are conical, with only 7% tubular. The core is constituted by capsid protein hexamer subunits. The core is disassembled soon after virion entry. Host restriction factors such as TRIM5-alpha or TRIMCyp bind retroviral capsids and cause premature capsid disassembly, leading to blocks in reverse transcription. Capsid restriction by TRIM5 is one of the factors which restricts HIV-1 to the human species. Host PIN1 apparently facilitates the virion uncoating. On the other hand, interactions with PDZD8 or CYPA stabilize the capsid. Functionally, encapsulates and protects viral dimeric unspliced genomic RNA (gRNA). Binds these RNAs through its zinc fingers. Acts as a nucleic acid chaperone which is involved in rearangement of nucleic acid secondary structure during gRNA retrotranscription. Also facilitates template switch leading to recombination. As part of the polyprotein, participates in gRNA dimerization, packaging, tRNA incorporation and virion assembly. Aspartyl protease that mediates proteolytic cleavages of Gag and Gag-Pol polyproteins during or shortly after the release of the virion from the plasma membrane. Cleavages take place as an ordered, step-wise cascade to yield mature proteins. This process is called maturation. Displays maximal activity during the budding process just prior to particle release from the cell. Also cleaves Nef and Vif, probably concomitantly with viral structural proteins on maturation of virus particles. Hydrolyzes host EIF4GI and PABP1 in order to shut off the capped cellular mRNA translation. The resulting inhibition of cellular protein synthesis serves to ensure maximal viral gene expression and to evade host immune response. Also mediates cleavage of host YTHDF3. Mediates cleavage of host CARD8, thereby activating the CARD8 inflammasome, leading to the clearance of latent HIV-1 in patient CD4(+) T-cells after viral reactivation; in contrast, HIV-1 can evade CARD8-sensing when its protease remains inactive in infected cells prior to viral budding. Its function is as follows. Multifunctional enzyme that converts the viral RNA genome into dsDNA in the cytoplasm, shortly after virus entry into the cell. This enzyme displays a DNA polymerase activity that can copy either DNA or RNA templates, and a ribonuclease H (RNase H) activity that cleaves the RNA strand of RNA-DNA heteroduplexes in a partially processive 3' to 5' endonucleasic mode. Conversion of viral genomic RNA into dsDNA requires many steps. A tRNA(3)-Lys binds to the primer-binding site (PBS) situated at the 5'-end of the viral RNA. RT uses the 3' end of the tRNA primer to perform a short round of RNA-dependent minus-strand DNA synthesis. The reading proceeds through the U5 region and ends after the repeated (R) region which is present at both ends of viral RNA. The portion of the RNA-DNA heteroduplex is digested by the RNase H, resulting in a ssDNA product attached to the tRNA primer. This ssDNA/tRNA hybridizes with the identical R region situated at the 3' end of viral RNA. This template exchange, known as minus-strand DNA strong stop transfer, can be either intra- or intermolecular. RT uses the 3' end of this newly synthesized short ssDNA to perform the RNA-dependent minus-strand DNA synthesis of the whole template. RNase H digests the RNA template except for two polypurine tracts (PPTs) situated at the 5'-end and near the center of the genome. It is not clear if both polymerase and RNase H activities are simultaneous. RNase H probably can proceed both in a polymerase-dependent (RNA cut into small fragments by the same RT performing DNA synthesis) and a polymerase-independent mode (cleavage of remaining RNA fragments by free RTs). Secondly, RT performs DNA-directed plus-strand DNA synthesis using the PPTs that have not been removed by RNase H as primers. PPTs and tRNA primers are then removed by RNase H. The 3' and 5' ssDNA PBS regions hybridize to form a circular dsDNA intermediate. Strand displacement synthesis by RT to the PBS and PPT ends produces a blunt ended, linear dsDNA copy of the viral genome that includes long terminal repeats (LTRs) at both ends. In terms of biological role, catalyzes viral DNA integration into the host chromosome, by performing a series of DNA cutting and joining reactions. This enzyme activity takes place after virion entry into a cell and reverse transcription of the RNA genome in dsDNA. The first step in the integration process is 3' processing. This step requires a complex comprising the viral genome, matrix protein, Vpr and integrase. This complex is called the pre-integration complex (PIC). The integrase protein removes 2 nucleotides from each 3' end of the viral DNA, leaving recessed CA OH's at the 3' ends. In the second step, the PIC enters cell nucleus. This process is mediated through integrase and Vpr proteins, and allows the virus to infect a non dividing cell. This ability to enter the nucleus is specific of lentiviruses, other retroviruses cannot and rely on cell division to access cell chromosomes. In the third step, termed strand transfer, the integrase protein joins the previously processed 3' ends to the 5' ends of strands of target cellular DNA at the site of integration. The 5'-ends are produced by integrase-catalyzed staggered cuts, 5 bp apart. A Y-shaped, gapped, recombination intermediate results, with the 5'-ends of the viral DNA strands and the 3' ends of target DNA strands remaining unjoined, flanking a gap of 5 bp. The last step is viral DNA integration into host chromosome. This involves host DNA repair synthesis in which the 5 bp gaps between the unjoined strands are filled in and then ligated. Since this process occurs at both cuts flanking the HIV genome, a 5 bp duplication of host DNA is produced at the ends of HIV-1 integration. Alternatively, Integrase may catalyze the excision of viral DNA just after strand transfer, this is termed disintegration. The chain is Gag-Pol polyprotein (gag-pol) from Human immunodeficiency virus type 1 group M subtype B (isolate JRCSF) (HIV-1).